The chain runs to 344 residues: Heat-inducible transcription repressor HrcA (344 aa).

It belongs to the HrcA family.

In terms of biological role, negative regulator of class I heat shock genes (grpE-dnaK-dnaJ and groELS operons). Prevents heat-shock induction of these operons. This chain is Heat-inducible transcription repressor HrcA, found in Streptococcus pneumoniae (strain P1031).